Reading from the N-terminus, the 378-residue chain is Transmembrane protein adipocyte-associated 1 homolog (378 aa).

N-linked (GlcNAc...) asparagine glycans are attached at residues asparagine 16, asparagine 25, and asparagine 36. 7 helical membrane passes run 61-81, 88-108, 136-156, 164-184, 205-225, 247-267, and 278-298; these read VMLL…LPSA, TSSP…AVGI, FFLL…GHLE, VLAI…TLEI, HFWL…VILP, ILAL…ADII, and FLYF…GFFG. The tract at residues 316 to 335 is disordered; it reads DSDVHLPHTSSSGLGRKDLD.

The protein belongs to the UPF0359 family.

It is found in the membrane. This Danio rerio (Zebrafish) protein is Transmembrane protein adipocyte-associated 1 homolog (tpra1).